The primary structure comprises 1559 residues: Bile pigment transporter 1 (1559 aa).

The Vacuolar portion of the chain corresponds to 1–29 (MSSLEVVDGCPYGYRPYPDSGTNALNPCF). The helical transmembrane segment at 30 to 50 (ISVISAWQAVFFLLIGSYQLW) threads the bilayer. The Cytoplasmic segment spans residues 51–84 (KLYKNNKVPPRFKNFPTLPSKINSRHLTHLTNVC). The chain crosses the membrane as a helical span at residues 85-105 (FQSTLIICELALVSQSSDRVY). At 106 to 110 (PFILK) the chain is on the vacuolar side. Residues 111–127 (KALYLNLLFNLGISLPT) traverse the membrane as a helical segment. Residues 128 to 139 (QYLAYFKSTFSM) are Cytoplasmic-facing. The helical transmembrane segment at 140-160 (GNQLFYYMFQILLQLFLILQR) threads the bilayer. At 161–178 (YYHGSSNERLTVISGQTA) the chain is on the vacuolar side. The helical transmembrane segment at 179-199 (MILEVLLLFNSVAIFIYDLCI) threads the bilayer. Residues 200–283 (FEPINELSEY…WLNRNSLWRA (84 aa)) lie on the Cytoplasmic side of the membrane. A helical membrane pass occupies residues 284 to 304 (IWKSFGRTISVAMLYETTSDL). One can recognise an ABC transmembrane type-1 1 domain in the interval 292–578 (ISVAMLYETT…VPSMINTIIE (287 aa)). Topologically, residues 305–333 (LSVVQPQFLRIFIDGLNPETSSKYPPLNG) are vacuolar. A helical transmembrane segment spans residues 334–354 (VFIALTLFVISVVSVFLTNQF). Residues 355-410 (YIGIFEAGLGIRGSLASLVYQKSLRLTLAERNEKSTGDILNLMSVDVLRIQRFFEN) are Cytoplasmic-facing. A helical transmembrane segment spans residues 411–431 (AQTIIGAPIQIIVVLTSLYWL). The Vacuolar segment spans residues 432–434 (LGK). A helical membrane pass occupies residues 435-455 (AVIGGLVTMAIMMPINAFLSR). Residues 456–518 (KVKKLSKTQM…NFRKIGIVSN (63 aa)) are Cytoplasmic-facing. A helical membrane pass occupies residues 519-539 (LIYFAWNCVPLMVTCSTFGLF). At 540 to 560 (SLFSDSPLSPAIVFPSLSLFN) the chain is on the vacuolar side. A helical transmembrane segment spans residues 561-581 (ILNSAIYSVPSMINTIIETSV). At 582 to 972 (SMERLKSFLL…VKTKIYLAYI (391 aa)) the chain is on the cytoplasmic side. Residues 639–871 (LRTDEESIIG…KNNTSKLKKL (233 aa)) enclose the ABC transporter 1 domain. Ser645 bears the Phosphoserine mark. An ATP-binding site is contributed by 672-679 (GRVGAGKS). Residues 877–899 (SPIDNGNESDVQTEHRSESEVDE) form a disordered region. Ser885 is modified (phosphoserine). Thr889 carries the post-translational modification Phosphothreonine. Phosphoserine occurs at positions 893 and 895. Thr916 is modified (phosphothreonine). Residues Ser927 and Ser931 each carry the phosphoserine modification. Thr934 is subject to Phosphothreonine. The helical transmembrane segment at 973-993 (KACGVLGVVLFFLFMILTRVF) threads the bilayer. An ABC transmembrane type-1 2 domain is found at 980 to 1265 (VVLFFLFMIL…IVRTTVTIET (286 aa)). The Vacuolar portion of the chain corresponds to 994 to 1030 (DLAENFWLKYWSESNEKNGSNERVWMFVGVYSLIGVA). A glycan (N-linked (GlcNAc...) asparagine) is linked at Asn1011. A helical membrane pass occupies residues 1031–1052 (SAAFNNLRSIMMLLYCSIRGSK). Topologically, residues 1053-1095 (KLHESMAKSVIRSPMTFFETTPVGRIINRFSSDMDAVDSNLQY) are cytoplasmic. The chain crosses the membrane as a helical span at residues 1096–1116 (IFSFFFKSILTYLVTVILVGY). Residue Asn1117 is a topological domain, vacuolar. A helical transmembrane segment spans residues 1118 to 1138 (MPWFLVFNMFLVVIYIYYQTF). Topologically, residues 1139–1209 (YIVLSRELKR…STNRWLSVRL (71 aa)) are cytoplasmic. A helical membrane pass occupies residues 1210-1230 (QTIGATIVLATAILALATMNT). The Vacuolar portion of the chain corresponds to 1231-1235 (KRQLS). The helical transmembrane segment at 1236 to 1256 (SGMVGLLMSYSLEVTGSLTWI) threads the bilayer. Residues 1257–1559 (VRTTVTIETN…SLCEKGGYLK (303 aa)) are Cytoplasmic-facing. An ABC transporter 2 domain is found at 1302–1553 (IEFKNYSTKY…KTSIFYSLCE (252 aa)). 1336 to 1343 (GRTGAGKS) contributes to the ATP binding site. Over residues 1420–1433 (HLEKMLHSKPRGDD) the composition is skewed to basic and acidic residues. A disordered region spans residues 1420–1439 (HLEKMLHSKPRGDDSNEEDG).

Belongs to the ABC transporter superfamily.

The protein resides in the vacuole membrane. Cooperates for the ATP-dependent vacuolar transport of bilirubin and glutathione conjugates. The polypeptide is Bile pigment transporter 1 (BPT1) (Saccharomyces cerevisiae (strain ATCC 204508 / S288c) (Baker's yeast)).